A 181-amino-acid chain; its full sequence is UPF0302 protein LMHCC_0635 (181 aa).

It belongs to the UPF0302 family.

The chain is UPF0302 protein LMHCC_0635 from Listeria monocytogenes serotype 4a (strain HCC23).